Reading from the N-terminus, the 449-residue chain is 3-phosphoshikimate 1-carboxyvinyltransferase (449 aa).

Residues Lys28, Ser29, and Arg33 each coordinate 3-phosphoshikimate. Lys28 lines the phosphoenolpyruvate pocket. The phosphoenolpyruvate site is built by Gly105 and Arg133. 3-phosphoshikimate-binding residues include Ser179, Gln181, Asp332, and Lys359. Gln181 is a phosphoenolpyruvate binding site. The active-site Proton acceptor is Asp332. Residues Arg363 and Arg406 each contribute to the phosphoenolpyruvate site.

This sequence belongs to the EPSP synthase family. As to quaternary structure, monomer.

It is found in the cytoplasm. The enzyme catalyses 3-phosphoshikimate + phosphoenolpyruvate = 5-O-(1-carboxyvinyl)-3-phosphoshikimate + phosphate. Its pathway is metabolic intermediate biosynthesis; chorismate biosynthesis; chorismate from D-erythrose 4-phosphate and phosphoenolpyruvate: step 6/7. Functionally, catalyzes the transfer of the enolpyruvyl moiety of phosphoenolpyruvate (PEP) to the 5-hydroxyl of shikimate-3-phosphate (S3P) to produce enolpyruvyl shikimate-3-phosphate and inorganic phosphate. The polypeptide is 3-phosphoshikimate 1-carboxyvinyltransferase (Nitrobacter winogradskyi (strain ATCC 25391 / DSM 10237 / CIP 104748 / NCIMB 11846 / Nb-255)).